A 236-amino-acid chain; its full sequence is Adenosine 5'-phosphosulfate reductase (236 aa).

4 residues coordinate [4Fe-4S] cluster: Cys-122, Cys-123, Cys-205, and Cys-208. Cys-231 functions as the Nucleophile; cysteine thiosulfonate intermediate in the catalytic mechanism.

This sequence belongs to the PAPS reductase family. CysH subfamily. Requires [4Fe-4S] cluster as cofactor.

It is found in the cytoplasm. The catalysed reaction is [thioredoxin]-disulfide + sulfite + AMP + 2 H(+) = adenosine 5'-phosphosulfate + [thioredoxin]-dithiol. The protein operates within sulfur metabolism; hydrogen sulfide biosynthesis; sulfite from sulfate. Catalyzes the formation of sulfite from adenosine 5'-phosphosulfate (APS) using thioredoxin as an electron donor. The chain is Adenosine 5'-phosphosulfate reductase from Mycolicibacterium smegmatis (strain ATCC 700084 / mc(2)155) (Mycobacterium smegmatis).